We begin with the raw amino-acid sequence, 51 residues long: UPF0181 protein VV2_0310 (51 aa).

Belongs to the UPF0181 family.

The chain is UPF0181 protein VV2_0310 from Vibrio vulnificus (strain CMCP6).